The sequence spans 58 residues: UPF0339 protein TDE_0826 (58 aa).

The protein belongs to the UPF0339 family.

This is UPF0339 protein TDE_0826 from Treponema denticola (strain ATCC 35405 / DSM 14222 / CIP 103919 / JCM 8153 / KCTC 15104).